The following is a 282-amino-acid chain: 1,4-dihydroxy-6-naphtoate synthase (282 aa).

Residues 57–59 (KVS) and 109–110 (TA) contribute to the substrate site. Histidine 153 (proton acceptor) is an active-site residue.

It belongs to the MqnA/MqnD family. MqnD subfamily.

It carries out the reaction cyclic dehypoxanthinylfutalosinate = 1,4-dihydroxy-6-naphthoate + dihydroxyacetone. It functions in the pathway quinol/quinone metabolism; menaquinone biosynthesis. Its function is as follows. Catalyzes the conversion of cyclic dehypoxanthine futalosine (cyclic DHFL) into 1,4-dihydroxy-6-naphthoate, a step in the biosynthesis of menaquinone (MK, vitamin K2). The protein is 1,4-dihydroxy-6-naphtoate synthase of Streptomyces coelicolor (strain ATCC BAA-471 / A3(2) / M145).